The sequence spans 342 residues: L-threonine 3-dehydrogenase (342 aa).

A Zn(2+)-binding site is contributed by Cys-38. Catalysis depends on charge relay system residues Thr-40 and His-43. Zn(2+)-binding residues include His-63, Glu-64, Cys-93, Cys-96, Cys-99, and Cys-107. NAD(+) contacts are provided by residues Ile-175, Asp-195, Arg-200, 262–264 (LGI), and 286–287 (IY).

It belongs to the zinc-containing alcohol dehydrogenase family. As to quaternary structure, homotetramer. Zn(2+) is required as a cofactor.

It localises to the cytoplasm. The enzyme catalyses L-threonine + NAD(+) = (2S)-2-amino-3-oxobutanoate + NADH + H(+). Its pathway is amino-acid degradation; L-threonine degradation via oxydo-reductase pathway; glycine from L-threonine: step 1/2. In terms of biological role, catalyzes the NAD(+)-dependent oxidation of L-threonine to 2-amino-3-ketobutyrate. This Aeromonas hydrophila subsp. hydrophila (strain ATCC 7966 / DSM 30187 / BCRC 13018 / CCUG 14551 / JCM 1027 / KCTC 2358 / NCIMB 9240 / NCTC 8049) protein is L-threonine 3-dehydrogenase.